We begin with the raw amino-acid sequence, 154 residues long: Large ribosomal subunit protein uL13 (154 aa).

This sequence belongs to the universal ribosomal protein uL13 family. As to quaternary structure, part of the 50S ribosomal subunit.

Functionally, this protein is one of the early assembly proteins of the 50S ribosomal subunit, although it is not seen to bind rRNA by itself. It is important during the early stages of 50S assembly. The polypeptide is Large ribosomal subunit protein uL13 (Allorhizobium ampelinum (strain ATCC BAA-846 / DSM 112012 / S4) (Agrobacterium vitis (strain S4))).